Consider the following 232-residue polypeptide: Flagellar L-ring protein (232 aa).

The signal sequence occupies residues 1–15 (MKKVLFYVLPFAFFG). Cys16 is lipidated: N-palmitoyl cysteine. Residue Cys16 is the site of S-diacylglycerol cysteine attachment.

The protein belongs to the FlgH family. As to quaternary structure, the basal body constitutes a major portion of the flagellar organelle and consists of four rings (L,P,S, and M) mounted on a central rod.

The protein resides in the cell outer membrane. Its subcellular location is the bacterial flagellum basal body. Functionally, assembles around the rod to form the L-ring and probably protects the motor/basal body from shearing forces during rotation. This is Flagellar L-ring protein from Campylobacter jejuni subsp. jejuni serotype O:6 (strain 81116 / NCTC 11828).